The sequence spans 490 residues: Phenylacetaldehyde synthase (490 aa).

L-phenylalanine-binding residues include Pro92, His193, and His308. Lys309 carries the post-translational modification N6-(pyridoxal phosphate)lysine. Position 338 (Phe338) interacts with L-phenylalanine.

This sequence belongs to the group II decarboxylase family. Homodimer. It depends on pyridoxal 5'-phosphate as a cofactor. In terms of tissue distribution, expressed in roots, rosette leaves, stems, cauline leaves and flowers.

It carries out the reaction L-phenylalanine + O2 + H2O + H(+) = 2-phenylacetaldehyde + H2O2 + NH4(+) + CO2. It catalyses the reaction L-dopa + O2 + H2O + H(+) = 3,4-dihydroxyphenylacetaldehyde + H2O2 + NH4(+) + CO2. In terms of biological role, bifunctional enzyme that catalyzes the decarboxylation of L-phenylalanine to 2-phenylethylamine, which is then oxidized to form 2-phenylacetaldehyde, a constituent of floral scent. 2-phenylacetaldehyde is a precursor of 2-phenylethanol, another constituent of floral scent. Catalyzes both the decarboxylation and deamination of L-dopa to 3,4-dihydroxylphenylacetaldehyde (DHPAA). This is Phenylacetaldehyde synthase from Arabidopsis thaliana (Mouse-ear cress).